A 236-amino-acid polypeptide reads, in one-letter code: Proteasome subunit beta type-1 (236 aa).

This sequence belongs to the peptidase T1B family. In terms of assembly, the 26S proteasome consists of a 20S proteasome core and two 19S regulatory subunits. The 20S proteasome core is composed of 28 subunits that are arranged in four stacked rings, resulting in a barrel-shaped structure. The two end rings are each formed by seven alpha subunits, and the two central rings are each formed by seven beta subunits. The catalytic chamber with the active sites is on the inside of the barrel.

The protein resides in the cytoplasm. It is found in the nucleus. Non-catalytic component of the proteasome, a multicatalytic proteinase complex which is characterized by its ability to cleave peptides with Arg, Phe, Tyr, Leu, and Glu adjacent to the leaving group at neutral or slightly basic pH. The proteasome has an ATP-dependent proteolytic activity. The protein is Proteasome subunit beta type-1 (psmB1) of Dictyostelium discoideum (Social amoeba).